Reading from the N-terminus, the 370-residue chain is Anhydro-N-acetylmuramic acid kinase (370 aa).

13–20 (GTSLDGVD) serves as a coordination point for ATP.

Belongs to the anhydro-N-acetylmuramic acid kinase family.

The catalysed reaction is 1,6-anhydro-N-acetyl-beta-muramate + ATP + H2O = N-acetyl-D-muramate 6-phosphate + ADP + H(+). Its pathway is amino-sugar metabolism; 1,6-anhydro-N-acetylmuramate degradation. It functions in the pathway cell wall biogenesis; peptidoglycan recycling. Its function is as follows. Catalyzes the specific phosphorylation of 1,6-anhydro-N-acetylmuramic acid (anhMurNAc) with the simultaneous cleavage of the 1,6-anhydro ring, generating MurNAc-6-P. Is required for the utilization of anhMurNAc either imported from the medium or derived from its own cell wall murein, and thus plays a role in cell wall recycling. The chain is Anhydro-N-acetylmuramic acid kinase from Vibrio cholerae serotype O1 (strain ATCC 39315 / El Tor Inaba N16961).